A 156-amino-acid polypeptide reads, in one-letter code: FAD synthase (156 aa).

ATP is bound by residues 16 to 17, 21 to 24, D101, and Y129; these read TF and HPGH.

The protein belongs to the archaeal FAD synthase family. In terms of assembly, homodimer. Requires a divalent metal cation as cofactor.

It catalyses the reaction FMN + ATP + H(+) = FAD + diphosphate. It functions in the pathway cofactor biosynthesis; FAD biosynthesis; FAD from FMN: step 1/1. In terms of biological role, catalyzes the transfer of the AMP portion of ATP to flavin mononucleotide (FMN) to produce flavin adenine dinucleotide (FAD) coenzyme. The polypeptide is FAD synthase (Methanococcus aeolicus (strain ATCC BAA-1280 / DSM 17508 / OCM 812 / Nankai-3)).